The chain runs to 105 residues: UPF0145 protein (105 aa).

Belongs to the UPF0145 family.

This chain is UPF0145 protein, found in Enterococcus faecalis (Streptococcus faecalis).